Reading from the N-terminus, the 131-residue chain is D-ribose pyranase (131 aa).

The active-site Proton donor is histidine 20. Substrate contacts are provided by residues aspartate 28, histidine 98, and 120 to 122 (YAN).

This sequence belongs to the RbsD / FucU family. RbsD subfamily. Homodecamer.

The protein localises to the cytoplasm. The catalysed reaction is beta-D-ribopyranose = beta-D-ribofuranose. The protein operates within carbohydrate metabolism; D-ribose degradation; D-ribose 5-phosphate from beta-D-ribopyranose: step 1/2. Catalyzes the interconversion of beta-pyran and beta-furan forms of D-ribose. The chain is D-ribose pyranase from Chloroflexus aggregans (strain MD-66 / DSM 9485).